An 847-amino-acid polypeptide reads, in one-letter code: B-cell receptor CD22 (847 aa).

The N-terminal stretch at 1-19 (MHLLGPWLLLLVLEYLAFC) is a signal peptide. The Ig-like V-type domain occupies 20 to 138 (DSSKWAFEHP…MERIHLNVSE (119 aa)). Over 20 to 687 (DSSKWAFEHP…YYSPETIGRR (668 aa)) the chain is Extracellular. Asparagine 67, asparagine 101, and asparagine 112 each carry an N-linked (GlcNAc...) asparagine glycan. An N-acetylneuraminate-binding site is contributed by arginine 120. N-linked (GlcNAc...) asparagine glycosylation is found at asparagine 135, asparagine 164, asparagine 231, asparagine 295, asparagine 363, asparagine 428, asparagine 445, asparagine 448, and asparagine 479. Ig-like C2-type domains lie at 143–235 (PHIQ…DTVQ), 242–324 (PKLE…AEVF), 331–416 (PEPS…LDVQ), 419–500 (PKKV…VALN), 505–582 (PRDV…QTAS), and 593–676 (PRRL…STLN). A disulfide bond links cysteine 161 and cysteine 219. 2 disulfides stabilise this stretch: cysteine 265–cysteine 309 and cysteine 353–cysteine 396. 2 cysteine pairs are disulfide-bonded: cysteine 442/cysteine 484 and cysteine 529/cysteine 571. Residues asparagine 574 and asparagine 634 are each glycosylated (N-linked (GlcNAc...) asparagine). The cysteines at positions 616 and 659 are disulfide-linked. A helical membrane pass occupies residues 688–708 (VAVGLGSCLAILILAICGLKL). The Cytoplasmic portion of the chain corresponds to 709-847 (QRRWKRTQSQ…ENVDYVILKH (139 aa)). A phosphoserine mark is found at serine 725, serine 726, and serine 729. Short sequence motifs (ITIM motif) lie at residues 760 to 765 (ISYTTL) and 794 to 799 (VTYSVL). Tyrosine 762 is subject to Phosphotyrosine. Phosphotyrosine occurs at positions 807, 822, and 842. 2 consecutive short sequence motifs (ITIM motif) follow at residues 820–825 (IHYSEL) and 840–845 (VDYVIL).

This sequence belongs to the immunoglobulin superfamily. SIGLEC (sialic acid binding Ig-like lectin) family. As to quaternary structure, predominantly monomer of isoform CD22-beta. Also found as heterodimer of isoform CD22-beta and a shorter isoform. Interacts with PTPN6/SHP-1, LYN, SYK, PIK3R1/PIK3R2 and PLCG1 upon phosphorylation. Interacts with GRB2, INPP5D and SHC1 upon phosphorylation. May form a complex with INPP5D/SHIP, GRB2 and SHC1. Phosphorylation of Tyr-762, Tyr-807 and Tyr-822 are involved in binding to SYK, GRB2 and SYK, respectively. Phosphorylation of Tyr-842 is involved in binding to SYK, PLCG2 and PIK3R1/PIK3R2. In terms of processing, phosphorylated on tyrosine residues by LYN.

Its subcellular location is the cell membrane. Most highly expressed siglec (sialic acid-binding immunoglobulin-like lectin) on B-cells that plays a role in various aspects of B-cell biology including differentiation, antigen presentation, and trafficking to bone marrow. Binds to alpha 2,6-linked sialic acid residues of surface molecules such as CD22 itself, CD45 and IgM in a cis configuration. Can also bind to ligands on other cells as an adhesion molecule in a trans configuration. Acts as an inhibitory coreceptor on the surface of B-cells and inhibits B-cell receptor induced signaling, characterized by inhibition of the calcium mobilization and cellular activation. Mechanistically, the immunoreceptor tyrosine-based inhibitory motif domain is phosphorylated by the Src kinase LYN, which in turn leads to the recruitment of the protein tyrosine phosphatase 1/PTPN6, leading to the negative regulation of BCR signaling. If this negative signaling from is of sufficient strength, apoptosis of the B-cell can be induced. The sequence is that of B-cell receptor CD22 from Gorilla gorilla gorilla (Western lowland gorilla).